A 761-amino-acid chain; its full sequence is Putative pentatricopeptide repeat-containing protein At2g02150 (761 aa).

PPR repeat units follow at residues serine 141 to cysteine 175, glycine 191 to proline 225, lysine 226 to proline 260, threonine 261 to proline 295, aspartate 296 to proline 330, aspartate 331 to proline 365, asparagine 366 to proline 400, asparagine 401 to tryptophan 435, asparagine 436 to proline 470, asparagine 471 to proline 505, aspartate 506 to alanine 540, asparagine 541 to valine 575, threonine 576 to aspartate 606, asparagine 612 to proline 646, aspartate 647 to leucine 681, aspartate 682 to proline 716, and aspartate 717 to threonine 751.

The protein belongs to the PPR family. P subfamily.

The polypeptide is Putative pentatricopeptide repeat-containing protein At2g02150 (Arabidopsis thaliana (Mouse-ear cress)).